The primary structure comprises 418 residues: MEDSSVFLLCLAASSGVPLYSRSKGSSRQLTFSVIGSLNGVHMFASNQDVLLTSTCTENTRVAWRAFHDSITLIVMSSESGASKLSLNRLLENVFNAMVLVIGLDDLVNIKNVERLKKDLRACYRLIDSFLLETEKMGDLTQCVDCVIAYDVPILQECLDNFTQAAESNFGCLMAGGKVVVATEKWWRLSSQEVMLLCWLVASLAPHSSRDYPVYLPQGSPTVPHRLLTFQLVPGVDVCVLCGPKPSLQKVETELIERFWKPVHDPIKSCLRVQMRSFPASVPLHHGILGLLLINRDMNKSLYTVQAHPMEEMQKTDLKLTLEQRRSALRSFYTLAMSRYFPSERADGKNTLPSEESFQSGFSHSAHQCYTISSSCKCYGMKTELHLLFLLLKPEVPTFSMRSIANKTIAAFTKDFPF.

Belongs to the fuzzy family. As to quaternary structure, interacts with rsg1. Interacts with intu and wdpcp; fuz, intu and wdpcp probably form the core CPLANE (ciliogenesis and planar polarity effectors) complex.

It localises to the cytoplasm. Its subcellular location is the cytoskeleton. The protein localises to the cilium basal body. In terms of biological role, probable planar cell polarity effector involved in cilium biogenesis. Proposed to function as core component of the CPLANE (ciliogenesis and planar polarity effectors) complex involved in the recruitment of peripheral IFT-A proteins to basal bodies. May regulate protein and membrane transport to the cilium. May control the organization of the apical actin cytoskeleton, which is essential for the normal orientation of elongating ciliary microtubules. This chain is Protein fuzzy homolog (fuz), found in Xenopus tropicalis (Western clawed frog).